The following is a 299-amino-acid chain: ATP phosphoribosyltransferase (299 aa).

The protein belongs to the ATP phosphoribosyltransferase family. Long subfamily. As to quaternary structure, equilibrium between an active dimeric form, an inactive hexameric form and higher aggregates. Interconversion between the various forms is largely reversible and is influenced by the natural substrates and inhibitors of the enzyme. Mg(2+) is required as a cofactor.

The protein localises to the cytoplasm. The enzyme catalyses 1-(5-phospho-beta-D-ribosyl)-ATP + diphosphate = 5-phospho-alpha-D-ribose 1-diphosphate + ATP. The protein operates within amino-acid biosynthesis; L-histidine biosynthesis; L-histidine from 5-phospho-alpha-D-ribose 1-diphosphate: step 1/9. With respect to regulation, feedback inhibited by histidine. In terms of biological role, catalyzes the condensation of ATP and 5-phosphoribose 1-diphosphate to form N'-(5'-phosphoribosyl)-ATP (PR-ATP). Has a crucial role in the pathway because the rate of histidine biosynthesis seems to be controlled primarily by regulation of HisG enzymatic activity. In Serratia proteamaculans (strain 568), this protein is ATP phosphoribosyltransferase.